Consider the following 70-residue polypeptide: Large ribosomal subunit protein bL31c (70 aa).

The protein belongs to the bacterial ribosomal protein bL31 family. Type A subfamily. As to quaternary structure, part of the 50S ribosomal subunit.

The protein localises to the plastid. Its subcellular location is the chloroplast. In terms of biological role, binds the 23S rRNA. The polypeptide is Large ribosomal subunit protein bL31c (Porphyra purpurea (Red seaweed)).